Here is a 227-residue protein sequence, read N- to C-terminus: Ubiquitin-conjugating enzyme E2 6 (227 aa).

Topologically, residues 1–206 (MASKGAYKRL…NSKQSWVKSR (206 aa)) are cytoplasmic. The UBC core domain maps to 5–163 (GAYKRLMKEY…FPELIDKNRE (159 aa)). The Glycyl thioester intermediate role is filled by Cys-87. Residues 207-225 (WSIAVLVFFALALARFFGA) form a helical membrane-spanning segment.

This sequence belongs to the ubiquitin-conjugating enzyme family.

The protein localises to the endoplasmic reticulum membrane. The catalysed reaction is S-ubiquitinyl-[E1 ubiquitin-activating enzyme]-L-cysteine + [E2 ubiquitin-conjugating enzyme]-L-cysteine = [E1 ubiquitin-activating enzyme]-L-cysteine + S-ubiquitinyl-[E2 ubiquitin-conjugating enzyme]-L-cysteine.. It functions in the pathway protein modification; protein ubiquitination. In terms of biological role, catalyzes the covalent attachment of ubiquitin to other proteins. Functions in degradation of misfolded or regulated proteins localized in the endoplasmic reticulum (ER) lumen or membrane via the ubiquitin-proteasome system. Cognate E2 conjugating enzyme for the doa10 ubiquitin ligase complex, which is part of the ERAD-C pathway responsible for the rapid degradation of membrane proteins with misfolded cytoplasmic domains. In Schizosaccharomyces pombe (strain 972 / ATCC 24843) (Fission yeast), this protein is Ubiquitin-conjugating enzyme E2 6 (ubc6).